Consider the following 428-residue polypeptide: Chaperone SurA (428 aa).

Positions 1–19 are cleaved as a signal peptide; it reads MNIWKTLLLGMLVTGSAVS. PpiC domains are found at residues 170–268 and 277–377; these read SVEY…KIED and VTEV…EVLD.

The protein resides in the periplasm. It carries out the reaction [protein]-peptidylproline (omega=180) = [protein]-peptidylproline (omega=0). Chaperone involved in the correct folding and assembly of outer membrane proteins. Recognizes specific patterns of aromatic residues and the orientation of their side chains, which are found more frequently in integral outer membrane proteins. May act in both early periplasmic and late outer membrane-associated steps of protein maturation. This is Chaperone SurA from Vibrio vulnificus (strain YJ016).